We begin with the raw amino-acid sequence, 796 residues long: Armadillo repeat-containing protein wrm-1 (796 aa).

Positions 17-59 (NFNPMTPSTSRVSTPVRPSSTMSARQYSGSPFKAQPQNMEPSN) are disordered. An ARM repeat occupies 462 to 504 (ESIHCIVQLIGCSDVTIVELATGTLRNIGLHNKMNKAFMVQDG).

As to quaternary structure, interacts (independently of ARM repeat) with nhr-25. Component of the beta-catenin-lit-1 complex (also called the lit-1/wrm-1 complex or the wrm-1/lit-1 kinase complex) at least composed of lit-1 and wrm-1. Interacts (via N-terminus) with lit-1; the interaction is direct and activates lit-1 kinase activity which leads to the phosphorylation of pop-1. This promotes pop-1 interaction with par-5 and translocation of pop-1 from the nucleus to the cytoplasm.

It is found in the cytoplasm. It localises to the cell cortex. Its subcellular location is the nucleus. Antagonistic role in the Wnt signaling pathway that operates in embryogenesis. When located at the cortex it has been shown to inhibit Wnt signaling during asymmetric cell division but when relocated to the nucleus it shows positive regulation. Has a role in blastomere signaling during endoderm specification. Component of the beta-catenin-lit-1 complex which promotes phosphorylation, down-regulation and subcellular relocation of pop-1. Within the complex, activates lit-1-dependent kinase activity. Can substitute for bar-1 indicating functional redundancy. Appears to have a role in centrosome positioning and can activation transcription in yeast. Involved in the development of distal tip cells (DTC) by regulating the asymmetric distribution of cye-1 and cki-1 between the daughters of Z1.a and Z4.p cells. The chain is Armadillo repeat-containing protein wrm-1 from Caenorhabditis elegans.